We begin with the raw amino-acid sequence, 183 residues long: Beta-defensin 129 (183 aa).

The first 19 residues, 1–19 (MKLLFPVFASLMLQYQVNT), serve as a signal peptide directing secretion. Disulfide bonds link Cys-27-Cys-53, Cys-34-Cys-48, and Cys-38-Cys-54. The tract at residues 141-183 (TATSTKSNTKESRDSATASPPPAPPPPNILPTPSLELEKAEEQ) is disordered. Residues 159–170 (SPPPAPPPPNIL) are compositionally biased toward pro residues.

Belongs to the beta-defensin family.

The protein localises to the secreted. Functionally, has antibacterial activity. The chain is Beta-defensin 129 (DEFB129) from Pongo pygmaeus (Bornean orangutan).